The primary structure comprises 117 residues: UPF0122 protein Teth39_1278 (117 aa).

Belongs to the UPF0122 family.

Might take part in the signal recognition particle (SRP) pathway. This is inferred from the conservation of its genetic proximity to ftsY/ffh. May be a regulatory protein. The polypeptide is UPF0122 protein Teth39_1278 (Thermoanaerobacter pseudethanolicus (strain ATCC 33223 / 39E) (Clostridium thermohydrosulfuricum)).